The following is a 219-amino-acid chain: uncharacterized protein (219 aa).

The N-terminal stretch at methionine 1–serine 17 is a signal peptide. Cysteine 18 is lipidated: N-palmitoyl cysteine. Cysteine 18 carries the S-diacylglycerol cysteine lipid modification. Positions lysine 110–serine 136 are disordered. A compositionally biased stretch (polar residues) spans glutamate 112–lysine 126. Residues tyrosine 137 to cysteine 165 are a coiled coil.

It localises to the cell membrane. This is an uncharacterized protein from Rickettsia prowazekii (strain Madrid E).